The following is a 356-amino-acid chain: Tyrosine recombinase XerS (356 aa).

Positions 16-121 constitute a Core-binding (CB) domain; sequence IMPWYVLDYY…ALSSLYKYLT (106 aa). The Tyr recombinase domain maps to 169–354; that stretch reads AFLDYVDKEY…VNDEQKNALD (186 aa). Active-site residues include R210, K234, H306, R309, and H332. Y341 serves as the catalytic O-(3'-phospho-DNA)-tyrosine intermediate.

It belongs to the 'phage' integrase family. XerS subfamily.

It localises to the cytoplasm. Its activity is regulated as follows. FtsK is required for recombination. In terms of biological role, site-specific tyrosine recombinase, which acts by catalyzing the cutting and rejoining of the recombining DNA molecules. Essential to convert dimers of the bacterial chromosome into monomers to permit their segregation at cell division. This chain is Tyrosine recombinase XerS, found in Streptococcus pyogenes serotype M1.